Consider the following 206-residue polypeptide: Probable GTP-binding protein EngB (206 aa).

Residues 23-195 (DLLEIAFVGR…WARIEAIMAE (173 aa)) enclose the EngB-type G domain. Residues 31–38 (GRSNVGKS), 58–62 (GRTQL), 76–79 (DLPG), 143–146 (TKCD), and 174–176 (FSA) each bind GTP. The Mg(2+) site is built by Ser-38 and Thr-60.

The protein belongs to the TRAFAC class TrmE-Era-EngA-EngB-Septin-like GTPase superfamily. EngB GTPase family. Mg(2+) is required as a cofactor.

In terms of biological role, necessary for normal cell division and for the maintenance of normal septation. In Geobacter sulfurreducens (strain ATCC 51573 / DSM 12127 / PCA), this protein is Probable GTP-binding protein EngB.